The following is a 237-amino-acid chain: Periplasmic deoxyribonuclease (237 aa).

Residues 1 to 27 form the signal peptide; the sequence is MSRPSRVLGLPLLSLGLTLLVSTPLQA.

It belongs to the EndA/NucM nuclease family.

It localises to the periplasm. Endonuclease which is capable of degrading plasmid DNA. The protein is Periplasmic deoxyribonuclease (dnsH) of Aeromonas hydrophila.